A 933-amino-acid polypeptide reads, in one-letter code: Progesterone receptor (933 aa).

The tract at residues 1–164 (MTELKAKGPR…PATQRVLSPL (164 aa)) is AF3; mediates transcriptional activation. The tract at residues 1–256 (MTELKAKGPR…AAAGGGAAAV (256 aa)) is disordered. The modulating, Pro-Rich stretch occupies residues 1–566 (MTELKAKGPR…YSFESLPQKI (566 aa)). Serine 20 is modified (phosphoserine). 2 consecutive short sequence motifs (LXXL motif) follow at residues 55–59 (LDGLL) and 115–119 (LDTLL). Phosphoserine occurs at positions 130 and 162. A mediates transcriptional transrepression region spans residues 165–305 (MSRSGGKAGD…LATTTMDFIH (141 aa)). A Nuclear localization signal motif is present at residues 183 to 187 (KVLPR). Phosphoserine is present on residues serine 190 and serine 213. The span at 220–231 (EVEEEDGSESED) shows a compositional bias: acidic residues. Serine 294 is modified (phosphoserine; by MAPK1). The disordered stretch occupies residues 332-380 (GAGAASAFAPPRSSPSASSTPVAVGDFPDCAYPPDADPKDDAYPLYGDF). Positions 335 to 350 (AASAFAPPRSSPSASS) are enriched in low complexity. The residue at position 345 (serine 345) is a Phosphoserine; by MAPK. Residue lysine 388 forms a Glycyl lysine isopeptide (Lys-Gly) (interchain with G-Cter in SUMO); alternate linkage. A Glycyl lysine isopeptide (Lys-Gly) (interchain with G-Cter in ubiquitin); alternate cross-link involves residue lysine 388. At serine 400 the chain carries Phosphoserine; by CDK2. Positions 415-454 (PDFPLGPPPPLPPRAPPSRPGEAAVTAAPASASVSSSSSS) are disordered. Pro residues predominate over residues 418–433 (PLGPPPPLPPRAPPSR). Residues 434-454 (PGEAAVTAAPASASVSSSSSS) show a composition bias toward low complexity. Residues 456 to 546 (STLECILYKA…VYPPYLNYLR (91 aa)) are AF1; mediates transcriptional activation. Residue lysine 531 forms a Glycyl lysine isopeptide (Lys-Gly) (interchain with G-Cter in SUMO) linkage. 2 NR C4-type zinc fingers span residues 567 to 587 (CLIC…CGSC) and 603 to 627 (CAGR…LRKC). Positions 567-639 (CLICGDEASG…AGMVLGGRKF (73 aa)) form a DNA-binding region, nuclear receptor. Position 676 is a phosphoserine (serine 676). The 235-residue stretch at 679–913 (QDIQFFPPLI…EFPEMMSEVI (235 aa)) folds into the NR LBD domain. The AF2; mediates transcriptional activation stretch occupies residues 687–933 (LINLLVSIEP…MVKPLLFHKK (247 aa)). Arginine 766 is a binding site for progesterone.

Belongs to the nuclear hormone receptor family. Interacts with SMARD1 and UNC45A. Interacts with CUEDC2; the interaction promotes ubiquitination, decreases sumoylation, and represses transcriptional activity. Interacts with PIAS3; the interaction promotes sumoylation of PR in a hormone-dependent manner, inhibits DNA-binding, and alters nuclear export. Interacts with SP1; the interaction requires ligand-induced phosphorylation on Ser-345 by ERK1/2-MAPK. Interacts with PRMT2. Interacts with NCOA2 and NCOA1. Interacts with KLF9. Interacts with GTF2B. In terms of processing, phosphorylated on multiple serine sites. Several of these sites are hormone-dependent. Phosphorylation on Ser-294 is highly hormone-dependent and modulates ubiquitination and sumoylation on Lys-388. Phosphorylation on Ser-345 also requires induction by hormone. Basal phosphorylation on Ser-162, Ser-190 and Ser-400 is increased in response to progesterone and can be phosphorylated in vitro by the CDK2-A1 complex. Increased levels of phosphorylation on Ser-400 also in the presence of EGF, heregulin, IGF, PMA and FBS. Phosphorylation at this site by CDK2 is ligand-independent, and increases nuclear translocation and transcriptional activity. Phosphorylation at Ser-162 and Ser-294, but not at Ser-190, is impaired during the G(2)/M phase of the cell cycle. Phosphorylation on Ser-345 by ERK1/2 MAPK is required for interaction with SP1. Sumoylation is hormone-dependent and represses transcriptional activity. Sumoylation on all three sites is enhanced by PIAS3. Desumoylated by SENP1. Sumoylation on Lys-388, the main site of sumoylation, is repressed by ubiquitination on the same site, and modulated by phosphorylation at Ser-294. Post-translationally, ubiquitination is hormone-dependent and represses sumoylation on the same site. Promoted by MAPK-mediated phosphorylation on Ser-294. Ubiquitinated by UBR5, leading to its degradation: UBR5 specifically recognizes and binds ligand-bound PGR when it is not associated with coactivators (NCOAs). In presence of NCOAs, the UBR5-degron is not accessible, preventing its ubiquitination and degradation. In terms of processing, palmitoylated by ZDHHC7 and ZDHHC21. Palmitoylation is required for plasma membrane targeting and for rapid intracellular signaling via ERK and AKT kinases and cAMP generation.

Its subcellular location is the nucleus. The protein resides in the cytoplasm. Its function is as follows. The steroid hormones and their receptors are involved in the regulation of eukaryotic gene expression and affect cellular proliferation and differentiation in target tissues. Transcriptional activator of several progesteron-dependent promoters in a variety of cell types. Involved in activation of SRC-dependent MAPK signaling on hormone stimulation. This is Progesterone receptor (PGR) from Chlorocebus aethiops (Green monkey).